The primary structure comprises 319 residues: Annexin A4 (319 aa).

Thr7 is modified (phosphothreonine). Ser12 bears the Phosphoserine mark. Annexin repeat units follow at residues 14-85 (FNAT…GMMT), 86-157 (PTVL…SLTA), 169-241 (ALVR…AIVK), and 245-316 (NKPA…ILCG). Lys213, Lys293, and Lys300 each carry N6-acetyllysine.

The protein belongs to the annexin family.

The protein localises to the zymogen granule membrane. Calcium/phospholipid-binding protein which promotes membrane fusion and is involved in exocytosis. This chain is Annexin A4 (Anxa4), found in Rattus norvegicus (Rat).